Reading from the N-terminus, the 194-residue chain is dCTP deaminase (194 aa).

DCTP contacts are provided by residues 110 to 115, aspartate 128, 136 to 138, tyrosine 171, lysine 178, and glutamine 182; these read RSSLAR and VLE. Glutamate 138 (proton donor/acceptor) is an active-site residue. Residues 174 to 194 form a disordered region; that stretch reads RKSSKYKDQQEAVASRISQDK.

It belongs to the dCTP deaminase family. Homotrimer.

It catalyses the reaction dCTP + H2O + H(+) = dUTP + NH4(+). It participates in pyrimidine metabolism; dUMP biosynthesis; dUMP from dCTP (dUTP route): step 1/2. Its function is as follows. Catalyzes the deamination of dCTP to dUTP. The sequence is that of dCTP deaminase from Shewanella frigidimarina (strain NCIMB 400).